The primary structure comprises 671 residues: MESIEQQLTELRTTLCHHEYLYHVMDAPEIPDAEYDRLMRELRELETKHPELITPDSPTQRVGAAPLAAFSQIRHEVPMLSLDNVFDEESFLAFNKRVQDRLKNNEKVTWCCELKLDGLAVSILYENGVLVSAATRGDGTTGEDITSNVRTIRAIPLKLHGENIPARLEVRGEVFLPQAGFEKINEDARRTGGKVFANPRNAAAGSLRQLDPRITAKRPLTFFCYGVGVLEGGELPDTHLGRLLQFKKWGVPVSDRVTLCESAEEVLAFYHKVEEDRPTLGFDIDGVVIKVNSLEQQEQLGFVARAPRWAVAFKFPAQEQMTFVRDVEFQVGRTGAITPVARLEPVHVAGVLVSNATLHNADEIERLGLRIGDKVVIRRAGDVIPQVVNVVLSERPEDTREVVFPTHCPVCGSDVERVEGEAVARCTGGLICGAQRKESLKHFVSRRAMDVDGMGDKIIDQLVEKEYVHTPADLFKLTAGKLTGLERMGPKLAQNVVNALEKAKETTFARFLYALGIREVGEATAAGLAAYFGTLEALEAASIEELQKVPDVGIVVASHVHNFFAEESNRNVISELLAEGVHWPAPIVINAEEIDSPFAGKTVVLTGSLSQMSRDDAKARLVELGAKVAGSVSKKTDLVIAGEAAGSKLAKAQELGIEVIDEAEMLRLLGS.

NAD(+)-binding positions include 32–36 (DAEYD), 81–82 (SL), and Glu-113. Lys-115 serves as the catalytic N6-AMP-lysine intermediate. Arg-136, Glu-173, Lys-290, and Lys-314 together coordinate NAD(+). Positions 408, 411, 426, and 432 each coordinate Zn(2+). One can recognise a BRCT domain in the interval 593 to 671 (EIDSPFAGKT…EAEMLRLLGS (79 aa)).

It belongs to the NAD-dependent DNA ligase family. LigA subfamily. The cofactor is Mg(2+). Requires Mn(2+) as cofactor.

It carries out the reaction NAD(+) + (deoxyribonucleotide)n-3'-hydroxyl + 5'-phospho-(deoxyribonucleotide)m = (deoxyribonucleotide)n+m + AMP + beta-nicotinamide D-nucleotide.. Its function is as follows. DNA ligase that catalyzes the formation of phosphodiester linkages between 5'-phosphoryl and 3'-hydroxyl groups in double-stranded DNA using NAD as a coenzyme and as the energy source for the reaction. It is essential for DNA replication and repair of damaged DNA. The sequence is that of DNA ligase from Shigella flexneri serotype 5b (strain 8401).